A 304-amino-acid chain; its full sequence is Glutaminase (304 aa).

Residues S63, N113, E157, N164, Y188, Y240, and V258 each contribute to the substrate site.

It belongs to the glutaminase family. As to quaternary structure, homotetramer.

It carries out the reaction L-glutamine + H2O = L-glutamate + NH4(+). This Paraburkholderia phytofirmans (strain DSM 17436 / LMG 22146 / PsJN) (Burkholderia phytofirmans) protein is Glutaminase.